The sequence spans 1057 residues: Adenylate-forming reductase stbB (1057 aa).

The tract at residues 21 to 378 (STKRQPGAVC…FRLRTDMNFE (358 aa)) is adenylation (A) domain. AMP contacts are provided by residues histidine 251, 344 to 345 (NF), threonine 349, and 423 to 426 (AVGR). A Carrier domain is found at 564 to 651 (ETLEEDIKAL…QMAAAIKNPS (88 aa)). The residue at position 600 (serine 600) is an O-(pantetheine 4'-phosphoryl)serine. Positions 693–1025 (IVVVTGSSGS…SGAVILGTDV (333 aa)) are reductase (R) domain. NADP(+) contacts are provided by residues 700-703 (SGSL), 783-785 (AAW), tyrosine 858, and lysine 862.

This sequence belongs to the adenylate-forming reductase family.

It carries out the reaction ilicicolinate B + AH2 + ATP = ilicicolin B + A + AMP + diphosphate. It participates in secondary metabolite biosynthesis; terpenoid biosynthesis. Nonribosomal peptide synthase-like protein; part of the cluster that mediates the biosynthesis of LL-Z1272-beta, also known as ilicicolin B, a prenylated aryl-aldehyde produced by several fungi and that serves as a key pathway intermediate for many fungal meroterpenoids. The first step in the pathway is performed by the non-reducing polyketide synthase stbA that produces orsellinic acid by condensing acetyl-CoA with 3 malonyl-CoA units. The prenyltransferase stbC then prenylates orsenilic acid into grifolic acid. Finally, grifolic acid is reduced to ilicicolin B by the NRPS-like protein stbB. This chain is Adenylate-forming reductase stbB, found in Stachybotrys bisbyi (Hyalostachybotrys bisbyi).